The chain runs to 597 residues: Probable methyltransferase-like protein 25 (597 aa).

Residues 245-254 show a composition bias toward basic and acidic residues; the sequence is ECKGDAESVQ. Disordered stretches follow at residues 245-265 and 317-342; these read ECKG…DLSA and TSSQ…KARD. Positions 317–326 are enriched in polar residues; the sequence is TSSQVQNTEK.

Functionally, probable methyltransferase. This is Probable methyltransferase-like protein 25 (Mettl25) from Mus musculus (Mouse).